The following is a 424-amino-acid chain: L-glutamine:2-deoxy-scyllo-inosose aminotransferase (424 aa).

Lysine 202 bears the N6-(pyridoxal phosphate)lysine mark.

The protein belongs to the DegT/DnrJ/EryC1 family. L-glutamine:2-deoxy-scyllo-inosose/scyllo-inosose aminotransferase subfamily. Pyridoxal 5'-phosphate is required as a cofactor.

It catalyses the reaction 2-deoxy-L-scyllo-inosose + L-glutamine = 2-deoxy-scyllo-inosamine + 2-oxoglutaramate. The catalysed reaction is 3-amino-2,3-dideoxy-scyllo-inosose + L-glutamine = 2-deoxystreptamine + 2-oxoglutaramate. It functions in the pathway metabolic intermediate biosynthesis; 2-deoxystreptamine biosynthesis; 2-deoxystreptamine from D-glucose 6-phosphate: step 2/4. Its pathway is metabolic intermediate biosynthesis; 2-deoxystreptamine biosynthesis; 2-deoxystreptamine from D-glucose 6-phosphate: step 4/4. It participates in antibiotic biosynthesis; paromomycin biosynthesis. Functionally, catalyzes the PLP-dependent transamination of 2-deoxy-scyllo-inosose (2-DOI) to form 2-deoxy-scyllo-inosamine (2-DOIA) using L-glutamine as the amino donor. Also catalyzes the transamination of 3-amino-2,3-dideoxy-scyllo-inosose (keto-2-DOIA) into 2-deoxystreptamine (2-DOS). This is L-glutamine:2-deoxy-scyllo-inosose aminotransferase (parS) from Streptomyces paromomycinus (Streptomyces rimosus subsp. paromomycinus).